A 252-amino-acid polypeptide reads, in one-letter code: MKTVTVRDLVVGEGAPKIIVSLMGKTITDVKSEALAYREADFDILEWRVDHFANVTTAESVLEAAGAIREIITDKPLLFTFRSAKEGGEQALTTEQYIALNRAAVDSGLVDMIDLELFTGDDEVKATVGYAHQHNVAVIMSNHDFHKTPAAEEIVQRLRKMQELGADIPKIAVMPQTKADVLTLLTATVEMQERYADRPIITMSMSKTGVISRLAGEVFGSAATFGAVKKASAPGQISVADLRTVLTILHQA.

3-dehydroquinate-binding positions include serine 21, 46–48, and arginine 82; that span reads EWR. The active-site Proton donor/acceptor is the histidine 143. Lysine 170 functions as the Schiff-base intermediate with substrate in the catalytic mechanism. 3 residues coordinate 3-dehydroquinate: arginine 213, serine 232, and glutamine 236.

Belongs to the type-I 3-dehydroquinase family. Homodimer.

It catalyses the reaction 3-dehydroquinate = 3-dehydroshikimate + H2O. Its pathway is metabolic intermediate biosynthesis; chorismate biosynthesis; chorismate from D-erythrose 4-phosphate and phosphoenolpyruvate: step 3/7. Functionally, involved in the third step of the chorismate pathway, which leads to the biosynthesis of aromatic amino acids. Catalyzes the cis-dehydration of 3-dehydroquinate (DHQ) and introduces the first double bond of the aromatic ring to yield 3-dehydroshikimate. This is 3-dehydroquinate dehydratase from Salmonella agona (strain SL483).